Consider the following 354-residue polypeptide: Ferrochelatase (354 aa).

Fe cation contacts are provided by His214 and Glu295.

It belongs to the ferrochelatase family.

The protein localises to the cytoplasm. The catalysed reaction is heme b + 2 H(+) = protoporphyrin IX + Fe(2+). The protein operates within porphyrin-containing compound metabolism; protoheme biosynthesis; protoheme from protoporphyrin-IX: step 1/1. Functionally, catalyzes the ferrous insertion into protoporphyrin IX. The sequence is that of Ferrochelatase from Burkholderia ambifaria (strain MC40-6).